The chain runs to 681 residues: Phosphomethylpyrimidine synthase (681 aa).

Positions 1–13 (MSNNTTSLPAENS) are enriched in polar residues. Residues 1 to 29 (MSNNTTSLPAENSSHPRKGTPIRKKQREE) form a disordered region. Basic residues predominate over residues 15–25 (HPRKGTPIRKK). Residues N254, M283, Y312, H348, 368–370 (SRG), 409–412 (DGLR), and E448 contribute to the substrate site. H452 is a Zn(2+) binding site. Y475 lines the substrate pocket. H516 is a Zn(2+) binding site. Residues C596, C599, and C604 each coordinate [4Fe-4S] cluster. Positions 658 to 667 (FRSRGSELYH) are enriched in basic and acidic residues. A disordered region spans residues 658–681 (FRSRGSELYHRPANLSAEANNEPT).

Belongs to the ThiC family. In terms of assembly, homodimer. [4Fe-4S] cluster serves as cofactor.

The catalysed reaction is 5-amino-1-(5-phospho-beta-D-ribosyl)imidazole + S-adenosyl-L-methionine = 4-amino-2-methyl-5-(phosphooxymethyl)pyrimidine + CO + 5'-deoxyadenosine + formate + L-methionine + 3 H(+). It participates in cofactor biosynthesis; thiamine diphosphate biosynthesis. Its function is as follows. Catalyzes the synthesis of the hydroxymethylpyrimidine phosphate (HMP-P) moiety of thiamine from aminoimidazole ribotide (AIR) in a radical S-adenosyl-L-methionine (SAM)-dependent reaction. The polypeptide is Phosphomethylpyrimidine synthase (Yersinia pseudotuberculosis serotype I (strain IP32953)).